Consider the following 92-residue polypeptide: Signal peptidase complex subunit 1 (92 aa).

The Cytoplasmic segment spans residues 1-12 (MDWQGQKLVEQL). The helical transmembrane segment at 13–30 (MQILLVISGVVAVVVGYT) threads the bilayer. Topologically, residues 31-36 (TESFRT) are lumenal. A helical membrane pass occupies residues 37-59 (MMLIYAGGVVLTTLVTVPNWPFY). Over 60–92 (NLHPLKWLDPSEAEKHPKPEVVSVASKKKFSKK) the chain is Cytoplasmic. Residues 73-92 (EKHPKPEVVSVASKKKFSKK) are disordered.

This sequence belongs to the SPCS1 family. In terms of assembly, component of the signal peptidase complex (SPC) composed of a catalytic subunit SEC11 and three accessory subunits SPCS1, SPCS2 and SPCS3. The complex induces a local thinning of the ER membrane which is used to measure the length of the signal peptide (SP) h-region of protein substrates. This ensures the selectivity of the complex towards h-regions shorter than 18-20 amino acids.

The protein resides in the endoplasmic reticulum membrane. In terms of biological role, component of the signal peptidase complex (SPC) which catalyzes the cleavage of N-terminal signal sequences from nascent proteins as they are translocated into the lumen of the endoplasmic reticulum. Dispensable for SPC enzymatic activity. In Arabidopsis thaliana (Mouse-ear cress), this protein is Signal peptidase complex subunit 1.